A 91-amino-acid polypeptide reads, in one-letter code: Small ribosomal subunit protein bS18 (91 aa).

Belongs to the bacterial ribosomal protein bS18 family. In terms of assembly, part of the 30S ribosomal subunit. Forms a tight heterodimer with protein bS6.

Its function is as follows. Binds as a heterodimer with protein bS6 to the central domain of the 16S rRNA, where it helps stabilize the platform of the 30S subunit. The protein is Small ribosomal subunit protein bS18 of Syntrophotalea carbinolica (strain DSM 2380 / NBRC 103641 / GraBd1) (Pelobacter carbinolicus).